The primary structure comprises 374 residues: 4-hydroxybenzoate polyprenyltransferase, mitochondrial (374 aa).

The N-terminal 34 residues, 1–34 (MLRWGGAGLARGLRAVRSAWLRGPRGLPLALVRS), are a transit peptide targeting the mitochondrion. At 35–83 (AGVPGARDRRAPAPGTQRGRALSLSAAAVVNSAPRPLQPYLRLMRLDKP) the chain is on the mitochondrial matrix side. Residues 84–104 (IGTWLLYLPCTWSIGLAADPG) traverse the membrane as a helical segment. Residues 105–108 (CFPD) are Mitochondrial intermembrane-facing. The chain crosses the membrane as a helical span at residues 109–129 (WYMLSLFGTGAILMRGAGCTI). At 130 to 148 (NDMWDRDFDKKVTRTANRP) the chain is on the mitochondrial matrix side. Residues 149–169 (IAAGDISTFQSFVFLGGQLTL) traverse the membrane as a helical segment. The Mitochondrial intermembrane segment spans residues 170–172 (ALG). A helical transmembrane segment spans residues 173 to 193 (VLLCLNYYSIAMGAASLLLVV). Residues 194–200 (TYPLVKR) lie on the Mitochondrial matrix side of the membrane. Residues 201-221 (ITFWPQLALGLTFNWGALLGW) form a helical membrane-spanning segment. Over 222–230 (SAVKGSCDP) the chain is Mitochondrial intermembrane. A helical transmembrane segment spans residues 231 to 251 (AVCLPLYFSGVMWTLIYDTIY). At 252-277 (AHQDKKDDALIGLKSTALLFQENTRQ) the chain is on the mitochondrial matrix side. Residues 278–298 (WLSGFGVAMVAALSLAGANNG) form a helical membrane-spanning segment. The Mitochondrial intermembrane segment spans residues 299–332 (QTVPYYAAVAAVGAHLAHQIYTVDIHRAEDCWDK). The chain crosses the membrane as a helical span at residues 333 to 353 (FTSNRTVGMLLFLGIVLGNLC). Over 354–374 (KEKTEEAKDAEAVRVGSEQTS) the chain is Mitochondrial matrix.

The protein belongs to the UbiA prenyltransferase family. Requires Mg(2+) as cofactor.

It is found in the mitochondrion inner membrane. It carries out the reaction an all-trans-polyprenyl diphosphate + 4-hydroxybenzoate = a 4-hydroxy-3-(all-trans-polyprenyl)benzoate + diphosphate. The enzyme catalyses all-trans-decaprenyl diphosphate + 4-hydroxybenzoate = 4-hydroxy-3-(all-trans-decaprenyl)benzoate + diphosphate. It catalyses the reaction all-trans-nonaprenyl diphosphate + 4-hydroxybenzoate = 4-hydroxy-3-(all-trans-nonaprenyl)benzoate + diphosphate. It participates in cofactor biosynthesis; ubiquinone biosynthesis. Mediates the second step in the final reaction sequence of coenzyme Q (CoQ) biosynthesis. Catalyzes the prenylation of para-hydroxybenzoate (PHB) with an all-trans polyprenyl donor (such as all-trans-nonaprenyl diphosphate). The length of the polyprenyl side chain varies depending on the species, in humans, the side chain is comprised of 10 isoprenyls producing CoQ10 (also known as ubiquinone), whereas rodents predominantly generate CoQ9. However, this specificity is not complete, human tissues have low amounts of CoQ9 and rodent organs contain some CoQ10. Plays a central role in the biosynthesis of CoQ9. CoQ9 is a vital molecule that transports electrons from mitochondrial respiratory chain complexes. CoQs also function as cofactors for uncoupling protein and play a role as regulators of the extracellularly-induced ceramide-dependent apoptotic pathway. Regulates mitochondrial permeability transition pore (mPTP) opening and ROS production (pivotal events in cell death) in a tissue specific manner. The chain is 4-hydroxybenzoate polyprenyltransferase, mitochondrial from Mus musculus (Mouse).